A 442-amino-acid polypeptide reads, in one-letter code: ATP-dependent protease ATPase subunit HslU (442 aa).

ATP is bound by residues Ile18, 60–65, Asp255, Glu320, and Arg392; that span reads GVGKTE.

The protein belongs to the ClpX chaperone family. HslU subfamily. In terms of assembly, a double ring-shaped homohexamer of HslV is capped on each side by a ring-shaped HslU homohexamer. The assembly of the HslU/HslV complex is dependent on binding of ATP.

The protein localises to the cytoplasm. Functionally, ATPase subunit of a proteasome-like degradation complex; this subunit has chaperone activity. The binding of ATP and its subsequent hydrolysis by HslU are essential for unfolding of protein substrates subsequently hydrolyzed by HslV. HslU recognizes the N-terminal part of its protein substrates and unfolds these before they are guided to HslV for hydrolysis. The protein is ATP-dependent protease ATPase subunit HslU of Hahella chejuensis (strain KCTC 2396).